A 373-amino-acid chain; its full sequence is Chorismate synthase (373 aa).

Position 46 (arginine 46) interacts with NADP(+). Residues 123–125 (RSS), 251–252 (NA), glycine 295, 310–314 (KPTPS), and arginine 337 each bind FMN.

This sequence belongs to the chorismate synthase family. Requires FMNH2 as cofactor.

It carries out the reaction 5-O-(1-carboxyvinyl)-3-phosphoshikimate = chorismate + phosphate. It functions in the pathway metabolic intermediate biosynthesis; chorismate biosynthesis; chorismate from D-erythrose 4-phosphate and phosphoenolpyruvate: step 7/7. Catalyzes the anti-1,4-elimination of the C-3 phosphate and the C-6 proR hydrogen from 5-enolpyruvylshikimate-3-phosphate (EPSP) to yield chorismate, which is the branch point compound that serves as the starting substrate for the three terminal pathways of aromatic amino acid biosynthesis. This reaction introduces a second double bond into the aromatic ring system. This Methanococcus maripaludis (strain DSM 14266 / JCM 13030 / NBRC 101832 / S2 / LL) protein is Chorismate synthase.